The chain runs to 25 residues: Galactose-binding lectin-2 (25 aa).

As to quaternary structure, homodimer. In terms of processing, N-glycosylated.

D-galactose specific lectin. Binds in decreasing order of affinity: melibiose, N-acetyllactosamine, D-galacturonic acid, D-galactose, methyl-alpha-D-galactoside, D-galactose, methyl-alpha-D-galactopyranoside, methyl-beta-D-galactopyranoside and lactose. Binds also the glycoproteins globotriose, asialofetuin and mucin. Possesses glycan-dependent cytotoxic activity against Burkitt's lymphoma Raji cells and erythroleukemia K562 cells. Has calcium-independent hemagglutinating activity towards human erythrocytes. This chain is Galactose-binding lectin-2, found in Aplysia kurodai (Kuroda's sea hare).